Here is an 803-residue protein sequence, read N- to C-terminus: MAYDHHEIDKKWQRYWAEHNEFNTTTDPKKPNYYALDMFPYPSGQGLHVGHPEGYTATDIVARMKRMQGFNVLHPMGWDAFGLPAEQYALNTGHNPKTFTKQNIETFKRQINSLGFSYDWNREINTTDPNYYKWTQWIFEQLYKHGLAYEAEVPVNWSPDLGTVVANEEVIDGKTERGGFPVVRKPMRQWMLKITAYAEKLLTDLDDLDWPESIKQMQRNWIGKSTGAQITFRVTDSHEPFDVFTTRPDTLFGATYVVMAPEHELVQKITTPAQQAVVDAYIDEAAHKSDLDRTALDKEKTGVWTGAYATNPVNGEKLPIWISDYVLASYGTGAIMSVPAHDDRDYAFAKKFGIEIKPVIEGGNVDEAAYTGDGVHINSGFLDGLNEHDAIDRMIKWLEDKGIGSAKINYKLRDWVFSRQRYWGEPIPVIHWEDGETTLVPEDELPLTLPEEADIKPSGTGESPLANLTDWVNVVDKNGRKGKRETNTMPQWAGSSWYFLRFVDPHNKEALADYDKLKAWMPVDLYIGGAEHAVLHLLYARFWNLFLYDIGAIPNKEPFQRLFNQGMILGDNHEKMSKSKGNVVNPDDVVDEYGADTLRLYEMFMGPLDAGIAWSTKGLAGARKFLDRVWSAFIDDEGKLRDRITTINDGRLDKVYNETVKKVTEDYDALHFNTAISQMMVFINSARKDDDLPLEYVEGFVKMLAPIAPHLMEEIWSRLGHDHSLTYAPWPSYDESKIKTDTYDMMIQVNGKLRGSITADVNESDDEIKQAALANDNVQKFTAGKDIKKIIVVPRKIVNIVAK.

Positions 40 to 51 (PYPSGQGLHVGH) match the 'HIGH' region motif. The short motif at 575-579 (KMSKS) is the 'KMSKS' region element. Lys578 contributes to the ATP binding site.

It belongs to the class-I aminoacyl-tRNA synthetase family.

Its subcellular location is the cytoplasm. The enzyme catalyses tRNA(Leu) + L-leucine + ATP = L-leucyl-tRNA(Leu) + AMP + diphosphate. This is Leucine--tRNA ligase from Lacticaseibacillus paracasei (strain ATCC 334 / BCRC 17002 / CCUG 31169 / CIP 107868 / KCTC 3260 / NRRL B-441) (Lactobacillus paracasei).